A 242-amino-acid chain; its full sequence is UDP-2,3-diacylglucosamine hydrolase (242 aa).

Residues aspartate 8, histidine 10, aspartate 41, asparagine 79, and histidine 114 each contribute to the Mn(2+) site. A substrate-binding site is contributed by 79-80 (NR). Substrate is bound by residues aspartate 122, lysine 164, lysine 167, and histidine 195. Histidine 195 and histidine 197 together coordinate Mn(2+).

Belongs to the LpxH family. Requires Mn(2+) as cofactor.

It is found in the cell inner membrane. It carries out the reaction UDP-2-N,3-O-bis[(3R)-3-hydroxytetradecanoyl]-alpha-D-glucosamine + H2O = 2-N,3-O-bis[(3R)-3-hydroxytetradecanoyl]-alpha-D-glucosaminyl 1-phosphate + UMP + 2 H(+). It functions in the pathway glycolipid biosynthesis; lipid IV(A) biosynthesis; lipid IV(A) from (3R)-3-hydroxytetradecanoyl-[acyl-carrier-protein] and UDP-N-acetyl-alpha-D-glucosamine: step 4/6. Hydrolyzes the pyrophosphate bond of UDP-2,3-diacylglucosamine to yield 2,3-diacylglucosamine 1-phosphate (lipid X) and UMP by catalyzing the attack of water at the alpha-P atom. Involved in the biosynthesis of lipid A, a phosphorylated glycolipid that anchors the lipopolysaccharide to the outer membrane of the cell. This is UDP-2,3-diacylglucosamine hydrolase from Vibrio cholerae serotype O1 (strain ATCC 39315 / El Tor Inaba N16961).